A 361-amino-acid polypeptide reads, in one-letter code: MERTLDRVGVFAATHAAVAACDPLQARALVLQLPGLNRNKDVPGIVGLLREFLPVRGLPCGWGFVEAAAAMRDIGFFLGSLKRHGHEPAEVVPGLEPVLLDLARATNLPPRETLLHVTVWNPTAADAQRSYTGLPDEAHLLESVRISMAALEAAIALTVELFDVSLRSPEFAQRCDELEAYLQKMVESIVYAYRFISPQVFYDELRPFYEPIRVGGQSYLGPGAVEMPLFVLEHVLWGSQSDDQTYREFKETYLPYVLPAYRAVYARFSGEPALIDRALDEARAVGTRDEHVRAGLTALERVFKVLLRFRAPHLKLAERAYEVGQSGPEIGSGGYAPSMLGELLTLTYAARSRVRAALDES.

222–225 (PGAV) is a substrate binding site. Histidine 313 is a binding site for heme. Tyrosine 321 and serine 332 together coordinate substrate.

The protein belongs to the PrnB family. In terms of assembly, monomer. The cofactor is heme b.

It catalyses the reaction 7-chloro-L-tryptophan + AH2 + O2 = monodechloroaminopyrrolnitrin + A + CO2 + 2 H2O. The protein operates within antibiotic biosynthesis. Functionally, involved in the biosynthesis of the antifungal antibiotic pyrrolnitrin. Catalyzes the ring rearrangement and decarboxylation to convert 7-chloro-L-tryptophan (7-CLT) to monodechloroaminopyrrolnitrin (MDA). It can also use 7-chloro-D-tryptophan, but 7-chloro-L-tryptophan is the preferred natural enantiomer. The protein is Monodechloroaminopyrrolnitrin synthase PrnB (prnB) of Pseudomonas fluorescens.